The primary structure comprises 442 residues: Cyclic adenylate deaminase (442 aa).

Belongs to the metallo-dependent hydrolases superfamily. Adenosine and AMP deaminases family. Zn(2+) serves as cofactor.

It catalyses the reaction 3',5'-cyclic AMP + H2O + H(+) = 3',5'-cyclic IMP + NH4(+). Deaminates cAMP into cIMP, thereby repressing cAMP dependent metabolism or genes. The protein is Cyclic adenylate deaminase (add) of Leptospira interrogans serogroup Icterohaemorrhagiae serovar copenhageni (strain Fiocruz L1-130).